The following is a 628-amino-acid chain: Biosynthetic arginine decarboxylase (628 aa).

At K99 the chain carries N6-(pyridoxal phosphate)lysine. Residue 279-289 (VDVGGGLGIDY) participates in substrate binding.

It belongs to the Orn/Lys/Arg decarboxylase class-II family. SpeA subfamily. It depends on Mg(2+) as a cofactor. Pyridoxal 5'-phosphate is required as a cofactor.

It catalyses the reaction L-arginine + H(+) = agmatine + CO2. The protein operates within amine and polyamine biosynthesis; agmatine biosynthesis; agmatine from L-arginine: step 1/1. Functionally, catalyzes the biosynthesis of agmatine from arginine. The sequence is that of Biosynthetic arginine decarboxylase from Xylella fastidiosa (strain M12).